The following is a 380-amino-acid chain: Putative RNA ligase (380 aa).

In terms of biological role, putative RNA ligase. Is able to catalyze the adenylation reaction of ssDNA 3'-terminal phosphate (ssDNA 3'p) to 3'-adenylated DNA (ssDNA 3'pp5'A). In Thermovibrio ammonificans (strain DSM 15698 / JCM 12110 / HB-1), this protein is Putative RNA ligase.